Consider the following 375-residue polypeptide: 4,4'-diaponeurosporenoate glycosyltransferase (375 aa).

The next 4 membrane-spanning stretches (helical) occupy residues 3–23 (WLSRILTVIVAMSMACGALIF), 164–184 (FYEGFSAIFNLMTVVGMNVFS), 277–297 (IMAAIVLWLFGSIASILGLCL), and 330–350 (FSNLLMVCHPLLFMFFTKIFI).

Belongs to the glycosyltransferase 2 family. CrtQ subfamily.

The protein resides in the cell membrane. Its pathway is carotenoid biosynthesis; staphyloxanthin biosynthesis; staphyloxanthin from farnesyl diphosphate: step 4/5. Functionally, catalyzes the glycosylation of 4,4'-diaponeurosporenoate, i.e. the esterification of glucose at the C1'' position with the carboxyl group of 4,4'-diaponeurosporenic acid, to form glycosyl-4,4'-diaponeurosporenoate. This is a step in the biosynthesis of staphyloxanthin, an orange pigment present in most staphylococci strains. The chain is 4,4'-diaponeurosporenoate glycosyltransferase (crtQ) from Staphylococcus aureus (strain bovine RF122 / ET3-1).